Reading from the N-terminus, the 102-residue chain is NADH-quinone oxidoreductase subunit K (102 aa).

3 helical membrane-spanning segments follow: residues 5–25 (IAHY…GIFL), 31–51 (IVIL…FVAF), and 66–86 (FVLT…VVFF).

This sequence belongs to the complex I subunit 4L family. As to quaternary structure, NDH-1 is composed of 14 different subunits. Subunits NuoA, H, J, K, L, M, N constitute the membrane sector of the complex.

Its subcellular location is the cell inner membrane. It carries out the reaction a quinone + NADH + 5 H(+)(in) = a quinol + NAD(+) + 4 H(+)(out). NDH-1 shuttles electrons from NADH, via FMN and iron-sulfur (Fe-S) centers, to quinones in the respiratory chain. The immediate electron acceptor for the enzyme in this species is believed to be ubiquinone. Couples the redox reaction to proton translocation (for every two electrons transferred, four hydrogen ions are translocated across the cytoplasmic membrane), and thus conserves the redox energy in a proton gradient. This is NADH-quinone oxidoreductase subunit K from Mesorhizobium japonicum (strain LMG 29417 / CECT 9101 / MAFF 303099) (Mesorhizobium loti (strain MAFF 303099)).